The sequence spans 1092 residues: SUMO-specific isopeptidase USPL1 (1092 aa).

Disordered regions lie at residues V145 to S168 and T185 to T207. 2 stretches are compositionally biased toward polar residues: residues E148–I163 and G197–C206. The region spanning V227–K500 is the USP domain. C236 functions as the Nucleophile in the catalytic mechanism. Residues C236 to V495 form an SUMO-binding region. H456 serves as the catalytic Proton acceptor. Disordered stretches follow at residues L713–E749, G797–C859, and A904–N930. Over residues A732–K748 the composition is skewed to polar residues. Residues H810–A819 are compositionally biased toward basic residues. Pro residues predominate over residues K821–P832. The residue at position 909 (S909) is a Phosphoserine.

This sequence belongs to the peptidase C19 family. As to quaternary structure, interacts with ELL.

The protein resides in the nucleus. The protein localises to the cajal body. Functionally, SUMO-specific isopeptidase involved in protein desumoylation. Specifically binds SUMO proteins with a higher affinity for SUMO2 and SUMO3 which it cleaves more efficiently. Also able to process full-length SUMO proteins to their mature forms. Plays a key role in RNA polymerase-II-mediated snRNA transcription in the Cajal bodies. Is a component of complexes that can bind to U snRNA genes. The chain is SUMO-specific isopeptidase USPL1 (USPL1) from Homo sapiens (Human).